A 125-amino-acid chain; its full sequence is Glucose-1-phosphate adenylyltransferase small subunit (125 aa).

Belongs to the bacterial/plant glucose-1-phosphate adenylyltransferase family. As to quaternary structure, heterotetramer. Leaves.

It is found in the plastid. Its subcellular location is the chloroplast. The protein localises to the amyloplast. The catalysed reaction is alpha-D-glucose 1-phosphate + ATP + H(+) = ADP-alpha-D-glucose + diphosphate. The protein operates within glycan biosynthesis; starch biosynthesis. With respect to regulation, activated by 3'phosphoglycerate, inhibited by orthophosphate. Allosteric regulation. In terms of biological role, this protein plays a role in synthesis of starch. It catalyzes the synthesis of the activated glycosyl donor, ADP-glucose from Glc-1-P and ATP. In Zea mays (Maize), this protein is Glucose-1-phosphate adenylyltransferase small subunit (GLG1).